The primary structure comprises 480 residues: MREEREDMLSWPLIGEKEKRSRFVKEEVEKQLLLSGPLIAVSLLQFCLQIISVMFVGHLGSLPLSAASIATSFASVTGFTFLMGTASAMDTVCGQSYGAKMYGMLGIQMQRAMLVLTLLSVPLSIVWANTEHFLVFFGQDKSIAHLSGSYARFMIPSIFAYGLLQCLNRFLQAQNNVIPVVICSGVTTSLHVIICWVLVLKSGLGFRGAAVANAISYWLNVILLSCYVKFSPSCSLTWTGFSKEARRDIIPFMKLVIPSAFMVCSLEMWSFELLVLSSGLLPNPVLETSCPRTVWMIPFGLSGAASTRVSNELGSGNPKGAKLAVRVVLSFSIVESILVGTVLILIRKIWGFAYSSDPEVVSHVASMLPILALGHSLDSFQTVLSGVARGCGWQKIGAFVNLGSYYLVGVPFGLLLGFHFHVGGRGLWLGIICALIVQGVCLSLITFFTNWDEEVKKATSRAKSSSEVKEFAVDNGSILV.

12 helical membrane passes run 36-56, 69-89, 118-138, 143-163, 180-200, 208-228, 255-275, 294-314, 326-346, 360-380, 396-416, and 428-448; these read GPLIAVSLLQFCLQIISVMFV, IATSFASVTGFTFLMGTASAM, LLSVPLSIVWANTEHFLVFFG, IAHLSGSYARFMIPSIFAYGL, VVICSGVTTSLHVIICWVLVL, GAAVANAISYWLNVILLSCYV, LVIPSAFMVCSLEMWSFELLV, VWMIPFGLSGAASTRVSNELG, RVVLSFSIVESILVGTVLILI, VVSHVASMLPILALGHSLDSF, IGAFVNLGSYYLVGVPFGLLL, and WLGIICALIVQGVCLSLITFF.

It belongs to the multi antimicrobial extrusion (MATE) (TC 2.A.66.1) family.

Its subcellular location is the membrane. In Arabidopsis thaliana (Mouse-ear cress), this protein is Protein DETOXIFICATION 15.